Reading from the N-terminus, the 139-residue chain is S-adenosylmethionine decarboxylase proenzyme (139 aa).

The Schiff-base intermediate with substrate; via pyruvic acid role is filled by S63. S63 carries the post-translational modification Pyruvic acid (Ser); by autocatalysis. H68 acts as the Proton acceptor; for processing activity in catalysis. C83 (proton donor; for catalytic activity) is an active-site residue.

Belongs to the prokaryotic AdoMetDC family. Type 1 subfamily. In terms of assembly, heterotetramer of two alpha and two beta chains arranged as a dimer of alpha/beta heterodimers. Pyruvate is required as a cofactor. In terms of processing, is synthesized initially as an inactive proenzyme. Formation of the active enzyme involves a self-maturation process in which the active site pyruvoyl group is generated from an internal serine residue via an autocatalytic post-translational modification. Two non-identical subunits are generated from the proenzyme in this reaction, and the pyruvate is formed at the N-terminus of the alpha chain, which is derived from the carboxyl end of the proenzyme. The post-translation cleavage follows an unusual pathway, termed non-hydrolytic serinolysis, in which the side chain hydroxyl group of the serine supplies its oxygen atom to form the C-terminus of the beta chain, while the remainder of the serine residue undergoes an oxidative deamination to produce ammonia and the pyruvoyl group blocking the N-terminus of the alpha chain.

It catalyses the reaction S-adenosyl-L-methionine + H(+) = S-adenosyl 3-(methylsulfanyl)propylamine + CO2. It participates in amine and polyamine biosynthesis; S-adenosylmethioninamine biosynthesis; S-adenosylmethioninamine from S-adenosyl-L-methionine: step 1/1. Its function is as follows. Catalyzes the decarboxylation of S-adenosylmethionine to S-adenosylmethioninamine (dcAdoMet), the propylamine donor required for the synthesis of the polyamines spermine and spermidine from the diamine putrescine. This Pyrococcus horikoshii (strain ATCC 700860 / DSM 12428 / JCM 9974 / NBRC 100139 / OT-3) protein is S-adenosylmethionine decarboxylase proenzyme.